Consider the following 406-residue polypeptide: Pyruvate dehydrogenase E1 component subunit beta-3, chloroplastic (406 aa).

The transit peptide at 1-70 directs the protein to the chloroplast; the sequence is MSAILQGAGA…PLIPNAVTTK (70 aa). A thiamine diphosphate-binding site is contributed by E142. Residues V195, A243, I244, and N248 each contribute to the K(+) site.

Tetramer of 2 alpha and 2 beta subunits. The cofactor is thiamine diphosphate.

Its subcellular location is the plastid. The protein resides in the chloroplast. It catalyses the reaction N(6)-[(R)-lipoyl]-L-lysyl-[protein] + pyruvate + H(+) = N(6)-[(R)-S(8)-acetyldihydrolipoyl]-L-lysyl-[protein] + CO2. Functionally, the pyruvate dehydrogenase complex catalyzes the overall conversion of pyruvate to acetyl-CoA and CO(2). It contains multiple copies of three enzymatic components: pyruvate dehydrogenase (E1), dihydrolipoamide acetyltransferase (E2) and lipoamide dehydrogenase (E3). The sequence is that of Pyruvate dehydrogenase E1 component subunit beta-3, chloroplastic (E1-BETA-2) from Arabidopsis thaliana (Mouse-ear cress).